We begin with the raw amino-acid sequence, 195 residues long: MIGVVLAGGKSSRFGGEKLLYKINGKPLILHTIERVLNAKKIEEIVIVTSKEKMKSFEKLGFSVVVDKLKIGPIGGVYTAISHFADVFVVAGDMPLINPKFVDWIVEKFHESNTLVCVPKWKNGYLEPLHAAYSQDFLEMIKRQIEKGEYMLGKAIRASSPCYIKIESLPLEWQESLFNINAKSDLKKIKGALQV.

GTP contacts are provided by residues 6–8 (LAG), K18, D67, and D93. D93 serves as a coordination point for Mg(2+).

Belongs to the MobA family. Mg(2+) is required as a cofactor.

It localises to the cytoplasm. It catalyses the reaction Mo-molybdopterin + GTP + H(+) = Mo-molybdopterin guanine dinucleotide + diphosphate. Its function is as follows. Transfers a GMP moiety from GTP to Mo-molybdopterin (Mo-MPT) cofactor (Moco or molybdenum cofactor) to form Mo-molybdopterin guanine dinucleotide (Mo-MGD) cofactor. In Thermococcus sibiricus (strain DSM 12597 / MM 739), this protein is Probable molybdenum cofactor guanylyltransferase.